We begin with the raw amino-acid sequence, 143 residues long: Peptide methionine sulfoxide reductase MsrB (143 aa).

One can recognise a MsrB domain in the interval 5 to 127; that stretch reads KEKRLKELNR…NSAALKFIPK (123 aa). C116 acts as the Nucleophile in catalysis.

The protein belongs to the MsrB Met sulfoxide reductase family.

The enzyme catalyses L-methionyl-[protein] + [thioredoxin]-disulfide + H2O = L-methionyl-(R)-S-oxide-[protein] + [thioredoxin]-dithiol. This chain is Peptide methionine sulfoxide reductase MsrB, found in Bacillus pumilus (strain SAFR-032).